The sequence spans 59 residues: Large ribosomal subunit protein uL30 (59 aa).

This sequence belongs to the universal ribosomal protein uL30 family. Part of the 50S ribosomal subunit.

The chain is Large ribosomal subunit protein uL30 from Buchnera aphidicola subsp. Schizaphis graminum (strain Sg).